A 71-amino-acid chain; its full sequence is MRKSFYTWLMTERNPKSNSPKAILADLAFEESAFPKHTDDFDEVSRFLEEHASFSFNLGDFDSIWQEYLEH.

Belongs to the UPF0346 family.

The sequence is that of UPF0346 protein SPG_0874 from Streptococcus pneumoniae serotype 19F (strain G54).